A 242-amino-acid polypeptide reads, in one-letter code: Coiled-coil domain-containing protein 107 (242 aa).

The first 24 residues, 1 to 24, serve as a signal peptide directing secretion; the sequence is MEGAGPVLSILGLLLVSAPFGVLG. The tract at residues 27 to 62 is disordered; the sequence is PSADLGAHPERGSQVSPGTTEPRRQPPPKDQRERAR. Positions 47 to 62 are enriched in basic and acidic residues; it reads EPRRQPPPKDQRERAR. Residues 65 to 85 traverse the membrane as a helical segment; the sequence is SLSLGALYTAAVVAFVLFKCL. Positions 97–132 form a coiled coil; it reads EKNKKKSSQSEQQLVQLTQQLAQTEQHLNHLMTQLD. Residues 186 to 210 are disordered; the sequence is KEDQEAGNSQAWEEPITWSPETRNL.

It localises to the membrane. In Mus musculus (Mouse), this protein is Coiled-coil domain-containing protein 107 (Ccdc107).